Reading from the N-terminus, the 316-residue chain is ATP synthase gamma chain (316 aa).

Belongs to the ATPase gamma chain family. F-type ATPases have 2 components, CF(1) - the catalytic core - and CF(0) - the membrane proton channel. CF(1) has five subunits: alpha(3), beta(3), gamma(1), delta(1), epsilon(1). CF(0) has three main subunits: a, b and c.

It localises to the cellular thylakoid membrane. In terms of biological role, produces ATP from ADP in the presence of a proton gradient across the membrane. The gamma chain is believed to be important in regulating ATPase activity and the flow of protons through the CF(0) complex. The chain is ATP synthase gamma chain from Prochlorococcus marinus (strain NATL1A).